Here is a 548-residue protein sequence, read N- to C-terminus: Chaperonin GroEL (548 aa).

Residues 29–32, Lys50, 86–90, Gly414, 478–480, and Asp494 contribute to the ATP site; these read TMGP, DGTTT, and NAA.

This sequence belongs to the chaperonin (HSP60) family. As to quaternary structure, forms a cylinder of 14 subunits composed of two heptameric rings stacked back-to-back. Interacts with the co-chaperonin GroES.

It localises to the cytoplasm. It carries out the reaction ATP + H2O + a folded polypeptide = ADP + phosphate + an unfolded polypeptide.. Together with its co-chaperonin GroES, plays an essential role in assisting protein folding. The GroEL-GroES system forms a nano-cage that allows encapsulation of the non-native substrate proteins and provides a physical environment optimized to promote and accelerate protein folding. In terms of biological role, may play a protective role against the defense mechanisms generated by the infected macrophages. The protein is Chaperonin GroEL of Legionella pneumophila.